The sequence spans 359 residues: Phospho-N-acetylmuramoyl-pentapeptide-transferase (359 aa).

Transmembrane regions (helical) follow at residues 3-23, 53-73, 84-104, 117-137, 156-176, 187-207, 231-251, 255-275, 283-303, and 330-350; these read QILFAAGIALAVSILLTPVLI, GGVAILAGLWAGYWGSHLIGI, GLLVLGLTTALGGVGFLDDFI, TAKLVGQLIAAVAFGILALQF, IATVTMGSVVFVAFCYLLVSA, LDGLAAGSMSLVLGAYVIITF, LALICAAGAGACIGFLWWNAA, IFMGDTGSLALGGMLAGLSIT, VVIGALFVAEAASVVIQVAVF, and VIIRFWLLAAIASAIGLALFY.

Belongs to the glycosyltransferase 4 family. MraY subfamily. Mg(2+) is required as a cofactor.

The protein localises to the cell membrane. The catalysed reaction is UDP-N-acetyl-alpha-D-muramoyl-L-alanyl-gamma-D-glutamyl-meso-2,6-diaminopimeloyl-D-alanyl-D-alanine + di-trans,octa-cis-undecaprenyl phosphate = di-trans,octa-cis-undecaprenyl diphospho-N-acetyl-alpha-D-muramoyl-L-alanyl-D-glutamyl-meso-2,6-diaminopimeloyl-D-alanyl-D-alanine + UMP. The protein operates within cell wall biogenesis; peptidoglycan biosynthesis. In terms of biological role, catalyzes the initial step of the lipid cycle reactions in the biosynthesis of the cell wall peptidoglycan: transfers peptidoglycan precursor phospho-MurNAc-pentapeptide from UDP-MurNAc-pentapeptide onto the lipid carrier undecaprenyl phosphate, yielding undecaprenyl-pyrophosphoryl-MurNAc-pentapeptide, known as lipid I. This Rhodococcus jostii (strain RHA1) protein is Phospho-N-acetylmuramoyl-pentapeptide-transferase.